The chain runs to 519 residues: Galactokinase (519 aa).

The alpha-D-galactose site is built by Arg47, Glu53, His54, and Asp56. ATP contacts are provided by Gly159, Gly161, Ser163, and Ser164. Residue Asp209 coordinates alpha-D-galactose. The active-site Proton acceptor is Asp209. ATP-binding residues include Asn257 and Lys258. Tyr266 is an alpha-D-galactose binding site.

It belongs to the GHMP kinase family. GalK subfamily.

The enzyme catalyses alpha-D-galactose + ATP = alpha-D-galactose 1-phosphate + ADP + H(+). Its pathway is carbohydrate metabolism; galactose metabolism. Galactokinase is a key enzyme in the galactose metabolism where it catalyzes the conversion of alpha-D-galactose to galactose 1-phosphate. Can also induce the transcription of the gal genes in response to the organism being challenged with galactose as the sole source of carbon. The protein is Galactokinase (gal1) of Schizosaccharomyces pombe (strain 972 / ATCC 24843) (Fission yeast).